Here is a 624-residue protein sequence, read N- to C-terminus: Chaperone protein HtpG (624 aa).

An a; substrate-binding region spans residues 1–336 (MKGQETRGFQ…SNDLPLNVSR (336 aa)). Positions 337 to 552 (EILQDSTVTR…ADEMSTQMAK (216 aa)) are b. The interval 553–624 (LFAAAGQSVP…IRRMNQLLVS (72 aa)) is c.

The protein belongs to the heat shock protein 90 family. As to quaternary structure, homodimer. UMPylated on a histidine residue by YdiU under ATP-limited conditions.

It is found in the cytoplasm. UMPylation of the chaperone by YdiU negatively regulates its activity, facilitating Salmonella survival under ATP-limited conditions. Molecular chaperone. Has ATPase activity. The protein is Chaperone protein HtpG of Salmonella typhimurium (strain LT2 / SGSC1412 / ATCC 700720).